The following is a 220-amino-acid chain: Octanoyltransferase (220 aa).

The region spanning 34–209 is the BPL/LPL catalytic domain; it reads ENSQDEIWVV…TLSQELGLAN (176 aa). Residues 73–80, 140–142, and 153–155 each bind substrate; these read RGGQVTYH, SLG, and GLA. The Acyl-thioester intermediate role is filled by Cys171.

Belongs to the LipB family.

Its subcellular location is the cytoplasm. The catalysed reaction is octanoyl-[ACP] + L-lysyl-[protein] = N(6)-octanoyl-L-lysyl-[protein] + holo-[ACP] + H(+). Its pathway is protein modification; protein lipoylation via endogenous pathway; protein N(6)-(lipoyl)lysine from octanoyl-[acyl-carrier-protein]: step 1/2. Catalyzes the transfer of endogenously produced octanoic acid from octanoyl-acyl-carrier-protein onto the lipoyl domains of lipoate-dependent enzymes. Lipoyl-ACP can also act as a substrate although octanoyl-ACP is likely to be the physiological substrate. This chain is Octanoyltransferase, found in Shewanella piezotolerans (strain WP3 / JCM 13877).